The primary structure comprises 762 residues: Proline-rich receptor-like protein kinase PERK10 (762 aa).

Residues 1–322 (MTTPAQAPRE…PTPVTDNSSS (322 aa)) are disordered. Residues 1–328 (MTTPAQAPRE…NSSSSGISIA (328 aa)) lie on the Extracellular side of the membrane. The segment covering 13-23 (SLSPSLASPPL) has biased composition (low complexity). Asn-37 is a glycosylation site (N-linked (GlcNAc...) asparagine). Positions 41–57 (PTREPTNGNPPETTNTP) are enriched in low complexity. 3 stretches are compositionally biased toward pro residues: residues 60–210 (SSPP…PSTP), 231–246 (PPPPGSKRPTPSPPSP), and 254–275 (HPSPPSPPEETLPPPKPSPDPL). The segment covering 276–305 (PSNSSSPPTLLPPSSVVSPPSPPRKSVSGP) has biased composition (low complexity). Asn-278 and Asn-319 each carry an N-linked (GlcNAc...) asparagine glycan. The chain crosses the membrane as a helical span at residues 329–349 (AVVGVSIGVALVLLTLIGVVV). The Cytoplasmic portion of the chain corresponds to 350-762 (CCLKKRKKRL…NSYISKDENL (413 aa)). Residues 370–410 (TPMESSSPRSDSALLKTQSSAPLVGNRSSNRTYLSQSEPGG) are disordered. Over residues 372-407 (MESSSPRSDSALLKTQSSAPLVGNRSSNRTYLSQSE) the composition is skewed to polar residues. Residues 430 to 706 (FSDENLLGEG…SQIVRAFDSL (277 aa)) enclose the Protein kinase domain. Residues 436-444 (LGEGGFGRV) and Lys-458 each bind ATP. Asp-554 acts as the Proton acceptor in catalysis.

This sequence belongs to the protein kinase superfamily. Ser/Thr protein kinase family. In terms of assembly, interacts with KIPK1 and KIPK2 (via its cytosolic domain). Mostly expressed in inflorescence bolts and flower buds, and, to a lower extent, in roots, seedlings, leaves and siliques.

Its subcellular location is the cell membrane. The catalysed reaction is L-seryl-[protein] + ATP = O-phospho-L-seryl-[protein] + ADP + H(+). It carries out the reaction L-threonyl-[protein] + ATP = O-phospho-L-threonyl-[protein] + ADP + H(+). In terms of biological role, could be involved in the negative regulation of root growth. In Arabidopsis thaliana (Mouse-ear cress), this protein is Proline-rich receptor-like protein kinase PERK10 (PERK10).